The sequence spans 460 residues: Cysteine--tRNA ligase (460 aa).

C28 lines the Zn(2+) pocket. The 'HIGH' region signature appears at 30 to 40 (MTVYDYCHLGH). C209, H234, and E238 together coordinate Zn(2+). The 'KMSKS' region motif lies at 266 to 270 (KMSKS). K269 serves as a coordination point for ATP.

This sequence belongs to the class-I aminoacyl-tRNA synthetase family. In terms of assembly, monomer. Requires Zn(2+) as cofactor.

The protein localises to the cytoplasm. It carries out the reaction tRNA(Cys) + L-cysteine + ATP = L-cysteinyl-tRNA(Cys) + AMP + diphosphate. The chain is Cysteine--tRNA ligase from Pseudomonas aeruginosa (strain UCBPP-PA14).